Reading from the N-terminus, the 253-residue chain is Imidazole glycerol phosphate synthase subunit HisF (253 aa).

Residues Asp-11 and Asp-130 contribute to the active site.

This sequence belongs to the HisA/HisF family. Heterodimer of HisH and HisF.

The protein localises to the cytoplasm. The catalysed reaction is 5-[(5-phospho-1-deoxy-D-ribulos-1-ylimino)methylamino]-1-(5-phospho-beta-D-ribosyl)imidazole-4-carboxamide + L-glutamine = D-erythro-1-(imidazol-4-yl)glycerol 3-phosphate + 5-amino-1-(5-phospho-beta-D-ribosyl)imidazole-4-carboxamide + L-glutamate + H(+). It functions in the pathway amino-acid biosynthesis; L-histidine biosynthesis; L-histidine from 5-phospho-alpha-D-ribose 1-diphosphate: step 5/9. Functionally, IGPS catalyzes the conversion of PRFAR and glutamine to IGP, AICAR and glutamate. The HisF subunit catalyzes the cyclization activity that produces IGP and AICAR from PRFAR using the ammonia provided by the HisH subunit. The sequence is that of Imidazole glycerol phosphate synthase subunit HisF from Ruegeria pomeroyi (strain ATCC 700808 / DSM 15171 / DSS-3) (Silicibacter pomeroyi).